The sequence spans 261 residues: Early E1A protein (261 aa).

The interval 43 to 51 (PTLHDLYDL) is interaction with RB1 in competition with E2F1. The tract at residues 78–149 (EGLDINPPPE…VNEGVKAASD (72 aa)) is interaction with UBE2I. The PXLXP motif, interaction with host ZMYND11 motif lies at 106 to 110 (PDLGA). Residues 115–119 (LRCYE) carry the LXCXE motif, interaction with host RB1 and TMEM173/STING motif. A zinc finger lies at 163–183 (CKSCEFHRNNTGMKELLCSLC). Positions 197–261 (SDDESPSPDS…DLSTRKLPRQ (65 aa)) are disordered. A compositionally biased stretch (low complexity) spans 203–212 (SPDSTTSPPE). A PXDLS motif, CTBP-binding motif is present at residues 250-254 (PLDLS). The short motif at 256 to 261 (RKLPRQ) is the Nuclear localization signal element.

Belongs to the adenoviridae E1A protein family. In terms of assembly, interacts with host UBE2I; this interaction interferes with polySUMOylation. Interacts with host RB1; this interaction induces the aberrant dissociation of RB1-E2F1 complex thereby disrupting the activity of RB1 and activating E2F1-regulated genes. Interacts with host ATF7; the interaction enhances ATF7-mediated viral transactivation activity which requires the zinc binding domains of both proteins. Isoform early E1A 32 kDa protein and isoform early E1A 26 kDa protein interact (via N-terminus) with CUL1 and E3 ubiquitin ligase RBX1; these interactions inhibit RBX1-CUL1-dependent elongation reaction of ubiquitin chains and attenuate ubiquitination of SCF(FBXW7) target proteins. Interacts (via PXLXP motif) with host ZMYND11/BS69 (via MYND-type zinc finger); this interaction inhibits E1A mediated transactivation. Interacts with host EP300; this interaction stimulates the acetylation of RB1 by recruiting EP300 and RB1 into a multimeric-protein complex. Interacts with host CTBP1 and CTBP2; this interaction seems to potentiate viral replication. Interacts with host DCAF7. Interacts with host DYRK1A. Interacts with host KPNA4; this interaction allows E1A import into the host nucleus. Interacts with host EP400; this interaction stabilizes MYC. Interacts with host TBP protein; this interaction probably disrupts the TBP-TATA complex. Interacts (via LXCXE motif) with host TMEM173/STING; this interaction impairs the ability of TMEM173/STING to sense cytosolic DNA and promote the production of type I interferon (IFN-alpha and IFN-beta). Interacts (via C-terminus) with host ZBED1/hDREF (via C-terminus); the interaction is direct.

It localises to the host nucleus. Functionally, plays a role in viral genome replication by driving entry of quiescent cells into the cell cycle. Stimulation of progression from G1 to S phase allows the virus to efficiently use the cellular DNA replicating machinery to achieve viral genome replication. E1A protein has both transforming and trans-activating activities. Induces the disassembly of the E2F1 transcription factor from RB1 by direct competition for the same binding site on RB1, with subsequent transcriptional activation of E2F1-regulated S-phase genes and of the E2 region of the adenoviral genome. Release of E2F1 leads to the ARF-mediated inhibition of MDM2 and causes TP53/p53 to accumulate because it is not targeted for degradation by MDM2-mediated ubiquitination anymore. This increase in TP53, in turn, would arrest the cell proliferation and direct its death but this effect is counteracted by the viral protein E1B-55K. Inactivation of the ability of RB1 to arrest the cell cycle is critical for cellular transformation, uncontrolled cellular growth and proliferation induced by viral infection. Interaction with RBX1 and CUL1 inhibits ubiquitination of the proteins targeted by SCF(FBXW7) ubiquitin ligase complex, and may be linked to unregulated host cell proliferation. The tumorigenesis-restraining activity of E1A may be related to the disruption of the host CtBP-CtIP complex through the CtBP binding motif. Interaction with host TMEM173/STING impairs the ability of TMEM173/STING to sense cytosolic DNA and promote the production of type I interferon (IFN-alpha and IFN-beta). Promotes the sumoylation of host ZBED1/hDREF with SUMO1. The sequence is that of Early E1A protein from Human adenovirus B serotype 7 (HAdV-7).